The chain runs to 60 residues: MDEPSQGGDQKLSAMEHVKKRHEEKGFLYACLFMLCCCFCCYETCEHCLECFCCCCKKDN.

The chain crosses the membrane as a helical span at residues 26-42 (GFLYACLFMLCCCFCCY).

The protein belongs to the CYSTM1 family. Mainly expressed in shoots, and, to a lower extent, in roots.

It is found in the cell membrane. It localises to the secreted. The protein resides in the cell wall. Confers resistance to heavy metal ions (e.g. aluminium (Al)) by chelating them at the plasma membrane of root cells, thus stopping their entry and reducing their accumulation. The chain is Protein CADMIUM TOLERANCE 4 from Oryza sativa subsp. japonica (Rice).